Consider the following 1470-residue polypeptide: Isonitrile lipopeptide synthase (1470 aa).

The tract at residues Pro584–Ala603 is disordered. A Carrier domain is found at Ala974–Glu1049. At Ser1009 the chain carries O-(pantetheine 4'-phosphoryl)serine. Residues Glu1049–Arg1059 are compositionally biased toward low complexity. Residues Glu1049 to Leu1070 are disordered.

It belongs to the ATP-dependent AMP-binding enzyme family. Pantetheine 4'-phosphate is required as a cofactor.

The enzyme catalyses 2 a (3R)-3-isocyanyl-fatty acyl-[ACP] + L-lysine + ATP + 2 NADPH = an isonitrile lipopeptide + 2 holo-[ACP] + AMP + diphosphate + 2 NADP(+). It catalyses the reaction 2 (3R)-3-isocyanylbutanoyl-[ACP] + L-lysine + ATP + 2 NADPH = (2S)-2,6-bis[(3R)-3-isocyanobutanamido]hexan-1-ol + 2 holo-[ACP] + AMP + diphosphate + 2 NADP(+). In terms of biological role, nonribosomal peptide synthetase (NRPS) involved in the biosynthesis of a unique class of isonitrile lipopeptides (INLPs). Catalyzes the final step in the pathway, i.e. the condensation of a (3R)-3-isocyanyl-fatty acyl-[ACP] to both amino groups of a lysine, producing isonitrile lipopeptides. Can use (3R)-3-isocyanylbutanoyl-[ACP] as substrate, leading to (2S)-2,6-bis[(3R)-3-isocyanobutanamido]hexan-1-ol. In Streptomyces coeruleorubidus, this protein is Isonitrile lipopeptide synthase.